A 159-amino-acid polypeptide reads, in one-letter code: SsrA-binding protein (159 aa).

This sequence belongs to the SmpB family.

It is found in the cytoplasm. In terms of biological role, required for rescue of stalled ribosomes mediated by trans-translation. Binds to transfer-messenger RNA (tmRNA), required for stable association of tmRNA with ribosomes. tmRNA and SmpB together mimic tRNA shape, replacing the anticodon stem-loop with SmpB. tmRNA is encoded by the ssrA gene; the 2 termini fold to resemble tRNA(Ala) and it encodes a 'tag peptide', a short internal open reading frame. During trans-translation Ala-aminoacylated tmRNA acts like a tRNA, entering the A-site of stalled ribosomes, displacing the stalled mRNA. The ribosome then switches to translate the ORF on the tmRNA; the nascent peptide is terminated with the 'tag peptide' encoded by the tmRNA and targeted for degradation. The ribosome is freed to recommence translation, which seems to be the essential function of trans-translation. The chain is SsrA-binding protein from Idiomarina loihiensis (strain ATCC BAA-735 / DSM 15497 / L2-TR).